The sequence spans 243 residues: Carboxy-S-adenosyl-L-methionine synthase (243 aa).

S-adenosyl-L-methionine is bound by residues Y35, 68–70 (GCS), 92–93 (DN), and R199.

It belongs to the class I-like SAM-binding methyltransferase superfamily. Cx-SAM synthase family. As to quaternary structure, homodimer.

The catalysed reaction is prephenate + S-adenosyl-L-methionine = carboxy-S-adenosyl-L-methionine + 3-phenylpyruvate + H2O. In terms of biological role, catalyzes the conversion of S-adenosyl-L-methionine (SAM) to carboxy-S-adenosyl-L-methionine (Cx-SAM). The polypeptide is Carboxy-S-adenosyl-L-methionine synthase (Helicobacter pylori (strain J99 / ATCC 700824) (Campylobacter pylori J99)).